A 269-amino-acid polypeptide reads, in one-letter code: Tryptophan synthase alpha chain (269 aa).

Residues Glu49 and Asp60 each act as proton acceptor in the active site.

The protein belongs to the TrpA family. As to quaternary structure, tetramer of two alpha and two beta chains.

It catalyses the reaction (1S,2R)-1-C-(indol-3-yl)glycerol 3-phosphate + L-serine = D-glyceraldehyde 3-phosphate + L-tryptophan + H2O. It functions in the pathway amino-acid biosynthesis; L-tryptophan biosynthesis; L-tryptophan from chorismate: step 5/5. The alpha subunit is responsible for the aldol cleavage of indoleglycerol phosphate to indole and glyceraldehyde 3-phosphate. This is Tryptophan synthase alpha chain from Actinobacillus succinogenes (strain ATCC 55618 / DSM 22257 / CCUG 43843 / 130Z).